Reading from the N-terminus, the 327-residue chain is tRNA pseudouridine synthase B (327 aa).

The Nucleophile role is filled by Asp-69. Substrate contacts are provided by Tyr-97, Tyr-201, and Leu-222.

This sequence belongs to the pseudouridine synthase TruB family. Type 1 subfamily.

It carries out the reaction uridine(55) in tRNA = pseudouridine(55) in tRNA. Responsible for synthesis of pseudouridine from uracil-55 in the psi GC loop of transfer RNAs. This chain is tRNA pseudouridine synthase B, found in Wigglesworthia glossinidia brevipalpis.